Consider the following 215-residue polypeptide: Pyrrolidone-carboxylate peptidase (215 aa).

Catalysis depends on residues Glu81, Cys144, and His168.

Belongs to the peptidase C15 family. In terms of assembly, homotetramer.

The protein localises to the cytoplasm. The enzyme catalyses Release of an N-terminal pyroglutamyl group from a polypeptide, the second amino acid generally not being Pro.. In terms of biological role, removes 5-oxoproline from various penultimate amino acid residues except L-proline. This chain is Pyrrolidone-carboxylate peptidase, found in Bacillus licheniformis (strain ATCC 14580 / DSM 13 / JCM 2505 / CCUG 7422 / NBRC 12200 / NCIMB 9375 / NCTC 10341 / NRRL NRS-1264 / Gibson 46).